Consider the following 473-residue polypeptide: Glutamine synthetase (473 aa).

The 85-residue stretch at 18–102 folds into the GS beta-grasp domain; the sequence is NNIKWVDLQF…VLTKVFWGGG (85 aa). The GS catalytic domain occupies 110 to 473; the sequence is PRGIAEEAEK…PMEIYQYLDS (364 aa). Residues Glu133 and Glu135 each contribute to the Mg(2+) site. Glu207 lines the ATP pocket. The Mg(2+) site is built by Glu212 and Glu220. Residues 264–265 and Gly265 each bind L-glutamate; that span reads NG. His269 provides a ligand contact to Mg(2+). Residues 271-273 and Ser273 each bind ATP; that span reads HFS. 3 residues coordinate L-glutamate: Arg324, Glu330, and Arg342. Residues Arg342, Arg347, and Lys357 each coordinate ATP. Glu362 is a binding site for Mg(2+). Position 364 (Arg364) interacts with L-glutamate.

It belongs to the glutamine synthetase family. In terms of assembly, oligomer of 12 subunits arranged in the form of two hexagons. Requires Mg(2+) as cofactor. Mn(2+) is required as a cofactor.

It localises to the cytoplasm. The catalysed reaction is L-glutamate + NH4(+) + ATP = L-glutamine + ADP + phosphate + H(+). Its activity is regulated as follows. Strongly inhibited by glycine and L-alanine. AMP at 10 mM displays a very weak inhibitory effect. The activity of this enzyme is not controlled by adenylation. Functionally, probably involved in nitrogen metabolism via ammonium assimilation. Catalyzes the ATP-dependent biosynthesis of glutamine from glutamate and ammonia. This chain is Glutamine synthetase, found in Sulfolobus acidocaldarius (strain ATCC 33909 / DSM 639 / JCM 8929 / NBRC 15157 / NCIMB 11770).